The chain runs to 152 residues: MNKRRANGSSHSTRPVRTGSPKWVRFSREEVEMLIEELAKKGYTPSMIGIVLRDQYGIPLAKPIIGKKVNQFLKDKGLASQIPEDLFNLIRRAVNVRRHLNEYPGDKTAKKGLEEIESKIRRLSRYYKRVEKLPQDWTYDPAKAELLVSASS.

The interval 1–20 is disordered; sequence MNKRRANGSSHSTRPVRTGS.

This sequence belongs to the universal ribosomal protein uS15 family. As to quaternary structure, part of the 30S ribosomal subunit.

This is Small ribosomal subunit protein uS15 from Metallosphaera sedula (strain ATCC 51363 / DSM 5348 / JCM 9185 / NBRC 15509 / TH2).